The sequence spans 755 residues: Polyribonucleotide nucleotidyltransferase (755 aa).

Mg(2+) contacts are provided by aspartate 482 and aspartate 488. The region spanning 549–608 is the KH domain; the sequence is PRMVSFYIDKDKISAAIGAKGKNIRSVCERSNAKIEIGDDGKVSVFAMSSAEAEIAKNMM. An S1 motif domain is found at 618–686; sequence GAIVDVKVVK…KGGCPKLSRR (69 aa). Basic and acidic residues predominate over residues 702–714; the sequence is NEEKKDSSNDRDY. A disordered region spans residues 702–755; the sequence is NEEKKDSSNDRDYYNSPFNRKSGHRKRPVHSRSSFSNRNNRPKFGNDDSSSSFY. Basic residues predominate over residues 722–731; it reads KSGHRKRPVH.

The protein belongs to the polyribonucleotide nucleotidyltransferase family. It depends on Mg(2+) as a cofactor.

The protein resides in the cytoplasm. It catalyses the reaction RNA(n+1) + phosphate = RNA(n) + a ribonucleoside 5'-diphosphate. In terms of biological role, involved in mRNA degradation. Catalyzes the phosphorolysis of single-stranded polyribonucleotides processively in the 3'- to 5'-direction. In Wolbachia sp. subsp. Brugia malayi (strain TRS), this protein is Polyribonucleotide nucleotidyltransferase.